The sequence spans 401 residues: Forkhead box protein H1 (401 aa).

The disordered stretch occupies residues 32 to 57; the sequence is MGPRDNSQLRPPEAESLSKTPKRRKK. Residues 64 to 163 constitute a DNA-binding region (fork-head); it reads KPPYTYLAMI…QNTALCRRWQ (100 aa). Residues 179–251 are disordered; that stretch reads VLHGQPYQPP…PSSSSETPLW (73 aa). The segment covering 185–195 has biased composition (pro residues); sequence YQPPSPPPPPR. Residues 221–230 are compositionally biased toward polar residues; that stretch reads GQSTAAQAGT. Residues 307 to 390 form an SMAD-interaction domain (SID) region; that stretch reads LWGQLPTSYL…VSHPRDLAAP (84 aa). A Fast/FoxH1 motif 1 (FM1) motif is present at residues 311 to 315; sequence LPTSY. The Fast/FoxH1 motif 2 (FM2) signature appears at 321 to 327; it reads PNVVMPL. The SMAD interaction motif (SIM) motif lies at 363–384; it reads LDSLFQGVPPNKSIYDVWVSHP.

Interacts with the MH2 domains of SMAD2 and SMAD3.

It localises to the nucleus. Its function is as follows. Transcriptional activator. Recognizes and binds to the DNA sequence 5'-TGT[GT][GT]ATT-3'. Required for induction of the goosecoid (GSC) promoter by TGF-beta or activin signaling. Forms a transcriptionally active complex containing FOXH1/SMAD2/SMAD4 on a site on the GSC promoter called TARE (TGF-beta/activin response element). In Mus musculus (Mouse), this protein is Forkhead box protein H1 (Foxh1).